We begin with the raw amino-acid sequence, 196 residues long: Peptidyl-tRNA hydrolase (196 aa).

Tyr-14 is a binding site for tRNA. The active-site Proton acceptor is the His-19. TRNA-binding residues include Phe-64, Asn-66, and Asn-112.

This sequence belongs to the PTH family. As to quaternary structure, monomer.

The protein resides in the cytoplasm. It catalyses the reaction an N-acyl-L-alpha-aminoacyl-tRNA + H2O = an N-acyl-L-amino acid + a tRNA + H(+). In terms of biological role, hydrolyzes ribosome-free peptidyl-tRNAs (with 1 or more amino acids incorporated), which drop off the ribosome during protein synthesis, or as a result of ribosome stalling. Its function is as follows. Catalyzes the release of premature peptidyl moieties from peptidyl-tRNA molecules trapped in stalled 50S ribosomal subunits, and thus maintains levels of free tRNAs and 50S ribosomes. The chain is Peptidyl-tRNA hydrolase from Solibacter usitatus (strain Ellin6076).